The primary structure comprises 598 residues: MPCVQAQYGSSPQGASPASQSYSYHSSGEYSSDFLTPEFVKFSMDLTNTEITATTSLPSFSTFMDNYSTGYDVKPPCLYQMPLSGQQSSIKVEDIQMHNYQQHSHLPPQSEEMMPHSGSVYYKPSSPPTPSTPGFQVQHSPMWDDPGSLHNFHQNYVATTHMIEQRKTPVSRLSLFSFKQSRPGTPVSSCQMRFDGPLHVPMNPEPAGSHHVVDGQTFAVPNPIRKPASMGFPGLQIGHASQLLDTQVPSPPSRGSPSNEGLCAVCGDNAACQHYGVRTCEGCKGFFKRTVQKNAKYVCLANKNCPVDKRRRNRCQYCRFQKCLAVGMVKEVVRTDSLKGRRGRLPSKPKSPQDPSPPSPPVSLISALVRAHVDSNPAMTSLDYSRFQANPDYQMSGDDTQHIQQFYDLLTGSMEIIRGWAEKIPGFADLPKADQDLLFESAFLELFVLRLAYRSNPVEGKLIFCNGVVLHRLQCVRGFGEWIDSIVEFSSNLQNMNIDISAFSCIAALAMVTERHGLKEPKRVEELQNKIVNCLKDHVTFNNGGLNRPNYLSKLLGKLPELRTLCTQGLQRIFYLKLEDLVPPPAIIDKLFLDTLPF.

A disordered region spans residues 1-22 (MPCVQAQYGSSPQGASPASQSY). Residues 8–22 (YGSSPQGASPASQSY) show a composition bias toward low complexity. The segment at residues 260–335 (EGLCAVCGDN…VGMVKEVVRT (76 aa)) is a DNA-binding region (nuclear receptor). 2 consecutive NR C4-type zinc fingers follow at residues 263-283 (CAVC…CEGC) and 299-323 (CLAN…FQKC). Positions 287 to 314 (FKRTVQKNAKYVCLANKNCPVDKRRRNR) match the Bipartite nuclear localization signal (NLS1) motif. The segment at 337–361 (SLKGRRGRLPSKPKSPQDPSPPSPP) is disordered. The Nuclear localization signal (NLS1) signature appears at 338–350 (LKGRRGRLPSKPK). Residues 352-361 (PQDPSPPSPP) show a composition bias toward pro residues. The NR LBD domain maps to 360 to 595 (PPVSLISALV…AIIDKLFLDT (236 aa)). The nuclear export sequence (NES1) motif lies at 443–452 (FLELFVLRLA). A nuclear export sequence (NES2) motif is present at residues 568 to 577 (QGLQRIFYLK).

Belongs to the nuclear hormone receptor family. NR4 subfamily. Interacts with SFPQ, NCOR2, SIN3A and HADC1. The interaction with NCOR2 increases in the absence of PITX3. Interacts with PER2. Shows a ubiquitous distribution in the cerebral cortex, hippocampus, thalamus, amygdala, and midbrain. Expression increases in prenatally stressed adult offspring in the ventral tegmental area, whereas no changes are observed in the substantia nigra area (at protein level). Not expressed in quiescent liver but is rapidly induced following partial hepatectomy and is specific to hepatic growth as it is not induced in other mitogen-treated cells. Expressed at very low levels in the lung, spleen and stomach and at high levels in the brain.

It localises to the cytoplasm. The protein resides in the nucleus. Transcriptional regulator which is important for the differentiation and maintenance of meso-diencephalic dopaminergic (mdDA) neurons during development. It is crucial for expression of a set of genes such as SLC6A3, SLC18A2, TH and DRD2 which are essential for development of mdDA neurons. May confer liver-specific regulation of delayed-early genes induced later in the G1 phase of regeneration along with NR4A1. The chain is Nuclear receptor subfamily 4 group A member 2 (Nr4a2) from Rattus norvegicus (Rat).